A 224-amino-acid polypeptide reads, in one-letter code: UPF0758 protein VS_0182 (224 aa).

Residues 1–21 (MPISKMPVESMPREKLLSRGP) are disordered. Residues 102-224 (ALTSPSHTKL…VISFAERGWI (123 aa)) form the MPN domain. 3 residues coordinate Zn(2+): His-173, His-175, and Asp-186. Positions 173–186 (HNHPSGVAEPSQAD) match the JAMM motif motif.

Belongs to the UPF0758 family.

In Vibrio atlanticus (strain LGP32) (Vibrio splendidus (strain Mel32)), this protein is UPF0758 protein VS_0182.